A 263-amino-acid polypeptide reads, in one-letter code: 3-methyl-2-oxobutanoate hydroxymethyltransferase (263 aa).

Mg(2+) contacts are provided by Asp44 and Asp83. 3-methyl-2-oxobutanoate-binding positions include Asp44 to Ser45, Asp83, and Lys112. Glu114 lines the Mg(2+) pocket. The Proton acceptor role is filled by Glu181.

It belongs to the PanB family. As to quaternary structure, homodecamer; pentamer of dimers. It depends on Mg(2+) as a cofactor.

The protein localises to the cytoplasm. The catalysed reaction is 3-methyl-2-oxobutanoate + (6R)-5,10-methylene-5,6,7,8-tetrahydrofolate + H2O = 2-dehydropantoate + (6S)-5,6,7,8-tetrahydrofolate. Its pathway is cofactor biosynthesis; (R)-pantothenate biosynthesis; (R)-pantoate from 3-methyl-2-oxobutanoate: step 1/2. Functionally, catalyzes the reversible reaction in which hydroxymethyl group from 5,10-methylenetetrahydrofolate is transferred onto alpha-ketoisovalerate to form ketopantoate. This chain is 3-methyl-2-oxobutanoate hydroxymethyltransferase, found in Sulfurimonas denitrificans (strain ATCC 33889 / DSM 1251) (Thiomicrospira denitrificans (strain ATCC 33889 / DSM 1251)).